A 507-amino-acid polypeptide reads, in one-letter code: Alkyl hydroperoxide reductase subunit F (507 aa).

FAD is bound at residue 207-222 (DVLIVGGGPASGSAAI). A disulfide bridge links C335 with C338. NAD(+) is bound at residue 347–361 (DVAVIGGGNSGVEAA). Position 467 to 477 (467 to 477 (TNVPGIFAAGD)) interacts with FAD.

Belongs to the class-II pyridine nucleotide-disulfide oxidoreductase family. As to quaternary structure, homodimer. Requires FAD as cofactor.

Serves to protect the cell against DNA damage by alkyl hydroperoxides. It can use either NADH or NADPH as electron donor for direct reduction of redox dyes or of alkyl hydroperoxides when combined with the AhpC protein. The chain is Alkyl hydroperoxide reductase subunit F (ahpF) from Staphylococcus epidermidis (strain ATCC 12228 / FDA PCI 1200).